Consider the following 267-residue polypeptide: 2-keto-3-deoxy-L-rhamnonate aldolase (267 aa).

The active-site Proton acceptor is the histidine 49. Glutamine 151 provides a ligand contact to substrate. Position 153 (glutamate 153) interacts with Mg(2+). Alanine 178 and aspartate 179 together coordinate substrate. A Mg(2+)-binding site is contributed by aspartate 179.

The protein belongs to the HpcH/HpaI aldolase family. KDR aldolase subfamily. As to quaternary structure, homohexamer. Mg(2+) is required as a cofactor.

The catalysed reaction is 2-dehydro-3-deoxy-L-rhamnonate = (S)-lactaldehyde + pyruvate. In terms of biological role, catalyzes the reversible retro-aldol cleavage of 2-keto-3-deoxy-L-rhamnonate (KDR) to pyruvate and lactaldehyde. This is 2-keto-3-deoxy-L-rhamnonate aldolase from Salmonella enteritidis PT4 (strain P125109).